A 123-amino-acid polypeptide reads, in one-letter code: Large ribosomal subunit protein uL22c (123 aa).

Belongs to the universal ribosomal protein uL22 family. As to quaternary structure, part of the 50S ribosomal subunit.

The protein resides in the plastid. It is found in the chloroplast. This protein binds specifically to 23S rRNA. Functionally, the globular domain of the protein is located near the polypeptide exit tunnel on the outside of the subunit, while an extended beta-hairpin is found that lines the wall of the exit tunnel in the center of the 70S ribosome. This chain is Large ribosomal subunit protein uL22c (rpl22), found in Chara vulgaris (Common stonewort).